The primary structure comprises 102 residues: Small ribosomal subunit protein bS20 (102 aa).

The protein belongs to the bacterial ribosomal protein bS20 family.

In terms of biological role, binds directly to 16S ribosomal RNA. The sequence is that of Small ribosomal subunit protein bS20 from Gloeobacter violaceus (strain ATCC 29082 / PCC 7421).